The chain runs to 249 residues: Triosephosphate isomerase (249 aa).

9–11 lines the substrate pocket; sequence NWK. His95 serves as the catalytic Electrophile. Catalysis depends on Glu165, which acts as the Proton acceptor. Substrate-binding positions include Gly171, Ser210, and 231-232; that span reads GG.

This sequence belongs to the triosephosphate isomerase family. As to quaternary structure, homodimer.

It localises to the cytoplasm. It carries out the reaction D-glyceraldehyde 3-phosphate = dihydroxyacetone phosphate. It functions in the pathway carbohydrate biosynthesis; gluconeogenesis. Its pathway is carbohydrate degradation; glycolysis; D-glyceraldehyde 3-phosphate from glycerone phosphate: step 1/1. Functionally, involved in the gluconeogenesis. Catalyzes stereospecifically the conversion of dihydroxyacetone phosphate (DHAP) to D-glyceraldehyde-3-phosphate (G3P). This Hyphomonas neptunium (strain ATCC 15444) protein is Triosephosphate isomerase.